The chain runs to 793 residues: Phenylalanine--tRNA ligase beta subunit (793 aa).

Residues 39 to 148 (AGQFTHVIVA…DEAPIGMDLR (110 aa)) form the tRNA-binding domain. One can recognise a B5 domain in the interval 401 to 477 (PGTVSFLFDT…RLYGYDKLQA (77 aa)). Positions 455, 461, 464, and 465 each coordinate Mg(2+). Residues 698-792 (SKYPQIRRDL…LENEFSILLR (95 aa)) enclose the FDX-ACB domain.

This sequence belongs to the phenylalanyl-tRNA synthetase beta subunit family. Type 1 subfamily. As to quaternary structure, tetramer of two alpha and two beta subunits. Mg(2+) is required as a cofactor.

The protein resides in the cytoplasm. It carries out the reaction tRNA(Phe) + L-phenylalanine + ATP = L-phenylalanyl-tRNA(Phe) + AMP + diphosphate + H(+). The protein is Phenylalanine--tRNA ligase beta subunit of Legionella pneumophila (strain Lens).